A 107-amino-acid chain; its full sequence is Age-related maculopathy susceptibility protein 2 (107 aa).

Positions 1 to 21 (MLRLYPGPMVTEAEGKGGPEM) are disordered.

Detected in retina and placenta.

It is found in the cytoplasm. This chain is Age-related maculopathy susceptibility protein 2 (ARMS2), found in Homo sapiens (Human).